The primary structure comprises 85 residues: MAHKKAGGSTRNGRDSEGKRLGVKRFGGEKVLAGTIIVRQRGTKFHPGVNVGCGKDHTLFALSHGKVKFEVKGTKNRSFVSIETE.

Residues 1 to 21 (MAHKKAGGSTRNGRDSEGKRL) are disordered.

It belongs to the bacterial ribosomal protein bL27 family.

The polypeptide is Large ribosomal subunit protein bL27 (Hamiltonella defensa subsp. Acyrthosiphon pisum (strain 5AT)).